The primary structure comprises 241 residues: MQLIPAIDLLGGQAVRLHQGRYDQVTVYDQDPAALAARLRRACARLHVVDLEGARAGLPVQADAVRAVIAAFGAEGGSVQVGGGIRSAAAAESYLALGADRIVLGTAAVNDPALVRDLAGRFPGRVVVAVDAKDGRVAVQGWEQVSSVTALDVARALAGAPVAALLYTDVSRDGTQVGPNLEATRELAASCGFPVLASGGVGSLAHLRALAQIPGVSGVIVGRALYEGAFTLAEAIEAASA.

Residue aspartate 8 is the Proton acceptor of the active site. The active-site Proton donor is aspartate 131.

Belongs to the HisA/HisF family.

The protein localises to the cytoplasm. The catalysed reaction is 1-(5-phospho-beta-D-ribosyl)-5-[(5-phospho-beta-D-ribosylamino)methylideneamino]imidazole-4-carboxamide = 5-[(5-phospho-1-deoxy-D-ribulos-1-ylimino)methylamino]-1-(5-phospho-beta-D-ribosyl)imidazole-4-carboxamide. It functions in the pathway amino-acid biosynthesis; L-histidine biosynthesis; L-histidine from 5-phospho-alpha-D-ribose 1-diphosphate: step 4/9. This chain is 1-(5-phosphoribosyl)-5-[(5-phosphoribosylamino)methylideneamino] imidazole-4-carboxamide isomerase, found in Sorangium cellulosum (strain So ce56) (Polyangium cellulosum (strain So ce56)).